The following is a 590-amino-acid chain: Suprabasin (590 aa).

The N-terminal stretch at 1–25 (MHLARLVGSCSLLLLLGALSGWAAS) is a signal peptide. Disordered stretches follow at residues 182-213 (GNEA…AHHG), 242-266 (FGQG…GVHH), 297-338 (GQGA…GVHH), and 545-570 (LNGN…SGAS). Low complexity-rich tracts occupy residues 190–200 (QGVHHAAGQAG), 243–254 (GQGAHHAAGQAG), 297–330 (GQGA…NEAG), and 546–559 (NGNH…HQGG). Residues 560–570 (ATTTPLASGAS) are compositionally biased toward polar residues.

Detected in thymus, uterus and esophagus.

The protein resides in the secreted. The chain is Suprabasin (SBSN) from Homo sapiens (Human).